We begin with the raw amino-acid sequence, 60 residues long: Large ribosomal subunit protein bL32 (60 aa).

The segment at 1 to 60 (MAVQQNKKSPSKRGMHRSHNALTVPGIAVEPTTGETHLRHHISPNGFYRGRQVLKNKSEA) is disordered. Residues 9–19 (SPSKRGMHRSH) are compositionally biased toward basic residues.

Belongs to the bacterial ribosomal protein bL32 family.

This is Large ribosomal subunit protein bL32 from Paracidovorax citrulli (strain AAC00-1) (Acidovorax citrulli).